A 422-amino-acid chain; its full sequence is Tyrosine--tRNA ligase (422 aa).

Y35 contributes to the L-tyrosine binding site. A 'HIGH' region motif is present at residues 40-49; it reads PTAPSLHVGH. The L-tyrosine site is built by Y170 and Q174. A 'KMSKS' region motif is present at residues 231 to 235; sequence KFGKT. K234 contributes to the ATP binding site. Positions 353–419 constitute an S4 RNA-binding domain; sequence APVVDLFAEV…GKKNLAAVEI (67 aa).

Belongs to the class-I aminoacyl-tRNA synthetase family. TyrS type 1 subfamily. As to quaternary structure, homodimer.

Its subcellular location is the cytoplasm. It carries out the reaction tRNA(Tyr) + L-tyrosine + ATP = L-tyrosyl-tRNA(Tyr) + AMP + diphosphate + H(+). In terms of biological role, catalyzes the attachment of tyrosine to tRNA(Tyr) in a two-step reaction: tyrosine is first activated by ATP to form Tyr-AMP and then transferred to the acceptor end of tRNA(Tyr). This chain is Tyrosine--tRNA ligase, found in Streptomyces coelicolor (strain ATCC BAA-471 / A3(2) / M145).